We begin with the raw amino-acid sequence, 292 residues long: Coatomer subunit epsilon (292 aa).

This sequence belongs to the COPE family. In terms of assembly, oligomeric complex that consists of at least the alpha, beta, beta', gamma, delta, epsilon and zeta subunits.

The protein resides in the cytoplasm. It localises to the golgi apparatus membrane. The protein localises to the cytoplasmic vesicle. Its subcellular location is the COPI-coated vesicle membrane. In terms of biological role, the coatomer is a cytosolic protein complex that binds to dilysine motifs and reversibly associates with Golgi non-clathrin-coated vesicles, which further mediate biosynthetic protein transport from the ER, via the Golgi up to the trans Golgi network. The coatomer complex is required for budding from Golgi membranes, and is essential for the retrograde Golgi-to-ER transport of dilysine-tagged proteins. The chain is Coatomer subunit epsilon (cope-1) from Caenorhabditis elegans.